The following is a 490-amino-acid chain: GTPase Der (490 aa).

EngA-type G domains lie at 3-166 and 200-373; these read PVVA…AEAM and IKLA…DSAT. GTP is bound by residues 9–16, 56–60, 118–121, 206–213, 253–257, and 318–321; these read GRPNVGKS, DTGGI, NKVD, GKPNVGKS, DTAGV, and NKWD. The KH-like domain occupies 374-458; that stretch reads RRVSTSMLTR…PIQLRFQEGG (85 aa). Positions 470–490 are disordered; the sequence is TVSQERRRKRMVGHIRDKNKD.

It belongs to the TRAFAC class TrmE-Era-EngA-EngB-Septin-like GTPase superfamily. EngA (Der) GTPase family. As to quaternary structure, associates with the 50S ribosomal subunit.

Its function is as follows. GTPase that plays an essential role in the late steps of ribosome biogenesis. This Shewanella pealeana (strain ATCC 700345 / ANG-SQ1) protein is GTPase Der.